The following is a 1316-amino-acid chain: DNA-directed RNA polymerase subunit beta' (1316 aa).

4 residues coordinate Zn(2+): Cys60, Cys62, Cys75, and Cys78. The Mg(2+) site is built by Asp535, Asp537, and Asp539. Zn(2+)-binding residues include Cys891, Cys968, Cys975, and Cys978.

The protein belongs to the RNA polymerase beta' chain family. In terms of assembly, the RNAP catalytic core consists of 2 alpha, 1 beta, 1 beta' and 1 omega subunit. When a sigma factor is associated with the core the holoenzyme is formed, which can initiate transcription. Mg(2+) serves as cofactor. The cofactor is Zn(2+).

The enzyme catalyses RNA(n) + a ribonucleoside 5'-triphosphate = RNA(n+1) + diphosphate. Its function is as follows. DNA-dependent RNA polymerase catalyzes the transcription of DNA into RNA using the four ribonucleoside triphosphates as substrates. In Mycobacterium bovis (strain BCG / Pasteur 1173P2), this protein is DNA-directed RNA polymerase subunit beta'.